Consider the following 360-residue polypeptide: Protein phosphatase 1L (360 aa).

Topologically, residues 1 to 25 are extracellular; it reads MIEDTMTLLSLLGRIMRYFLLRPET. A helical membrane pass occupies residues 26–42; the sequence is LFLLCISLALWSYFFHT. At 43-360 the chain is on the cytoplasmic side; sequence DEVKTIVKSS…FRNSSKTEEH (318 aa). The 260-residue stretch at 92 to 351 folds into the PPM-type phosphatase domain; that stretch reads NVAVYSIQGR…DNITVMVVKF (260 aa). Residues D128, G129, D302, and D342 each contribute to the Mn(2+) site.

Belongs to the PP2C family. As to quaternary structure, interacts with MAP3K7/TAK1 and MAP3K5. The cofactor is Mg(2+). It depends on Mn(2+) as a cofactor. In terms of tissue distribution, expressed in brain, heart, testis, liver, lung and skeletal muscle.

The protein resides in the membrane. The enzyme catalyses O-phospho-L-seryl-[protein] + H2O = L-seryl-[protein] + phosphate. It carries out the reaction O-phospho-L-threonyl-[protein] + H2O = L-threonyl-[protein] + phosphate. In terms of biological role, acts as a suppressor of the SAPK signaling pathways by associating with and dephosphorylating MAP3K7/TAK1 and MAP3K5, and by attenuating the association between MAP3K7/TAK1 and MAP2K4 or MAP2K6. The protein is Protein phosphatase 1L (Ppm1l) of Mus musculus (Mouse).